A 65-amino-acid chain; its full sequence is Large ribosomal subunit protein bL35 (65 aa).

A disordered region spans residues 1–22 (MPKIKTLRSAAKRFKKTASGKF). The span at 10-22 (AAKRFKKTASGKF) shows a compositional bias: basic residues.

Belongs to the bacterial ribosomal protein bL35 family.

This is Large ribosomal subunit protein bL35 from Buchnera aphidicola subsp. Schizaphis graminum (strain Sg).